The following is a 383-amino-acid chain: Histidine decarboxylase (383 aa).

H120 contacts substrate. K233 carries the post-translational modification N6-(pyridoxal phosphate)lysine.

It belongs to the group II decarboxylase family. Homotetramer. Requires pyridoxal 5'-phosphate as cofactor.

The enzyme catalyses L-histidine + H(+) = histamine + CO2. The chain is Histidine decarboxylase from Acinetobacter baumannii (strain ACICU).